The chain runs to 368 residues: Hydrophobic dipeptide epimerase (368 aa).

Residues threonine 143 and 168–170 (KIK) each bind substrate. Residues aspartate 197, glutamate 225, and aspartate 253 each contribute to the Mg(2+) site. Substrate-binding positions include lysine 277 and 329 to 331 (DMD).

The protein belongs to the mandelate racemase/muconate lactonizing enzyme family. It depends on Mg(2+) as a cofactor.

Functionally, catalyzes the epimerization of various hydrophobic dipeptides, such as L-Ala-L-Phe. Has epimerase activity with L-Ala-L-Thr, L-Ala-L-Met, L-Ala-L-Tyr, as well as L-Phe-L-Met, L-Phe-L-Ser and L-Phe-L-Thr (in vitro). The sequence is that of Hydrophobic dipeptide epimerase from Citrifermentans bemidjiense (strain ATCC BAA-1014 / DSM 16622 / JCM 12645 / Bem) (Geobacter bemidjiensis).